The following is a 189-amino-acid chain: Elongation factor P (189 aa).

Lysine 34 is modified (N6-(3,6-diaminohexanoyl)-5-hydroxylysine).

Belongs to the elongation factor P family. Post-translationally, may be beta-lysylated on the epsilon-amino group of Lys-34 by the combined action of EpmA and EpmB, and then hydroxylated on the C5 position of the same residue by EpmC (if this protein is present). Lysylation is critical for the stimulatory effect of EF-P on peptide-bond formation. The lysylation moiety may extend toward the peptidyltransferase center and stabilize the terminal 3-CCA end of the tRNA. Hydroxylation of the C5 position on Lys-34 may allow additional potential stabilizing hydrogen-bond interactions with the P-tRNA.

It localises to the cytoplasm. The protein operates within protein biosynthesis; polypeptide chain elongation. Functionally, involved in peptide bond synthesis. Alleviates ribosome stalling that occurs when 3 or more consecutive Pro residues or the sequence PPG is present in a protein, possibly by augmenting the peptidyl transferase activity of the ribosome. Modification of Lys-34 is required for alleviation. This is Elongation factor P from Francisella tularensis subsp. tularensis (strain FSC 198).